Reading from the N-terminus, the 544-residue chain is MAAKQVLFSDEARAKMLDGVNTLANAVKVTLGPKGRNVVLDKSFGTPTITKDGVSVAKEIELEDKFENMGAQIVKEVASKTADVAGDGTTTATVLAQALLTEGLKAVAAGMNPMDLKRGIDKATARLVEELKALSKPCSDPKSIEQVGTISANSDATVGKLIADAMAKVGKEGVITVEEGKGFEDELDVVEGMQFDRGYLSPYFATNQENMTTDLENPYILIVDKKISNIRDLLPILEGVSKSGRALLIIAEDVESEALATLVVNNMRGVVKVCAVKAPGFGDRRKAMLEDIATLTGATFVSEDLSMKLEETNMEHLGTASRVQVTKDNTTIIDGAGEKEAIAKRINVIKANIAEANSDYDREKLQERLAKLSGGVAVIKVGAVTEAEMKEKKDRVDDALHATRAAVEEGIVAGGGVALIRAQKALDGLTGENDDQNYGIALLRKAIEAPLRQIVSNAGGESSVVVNQVKANQGNYGYNAANDTYGDMVEMGILDPTKVTRSALQHAASIAGLMITTEAMIGEIKEAAPAMPMGGGMGGMPGMM.

ATP is bound by residues 30–33 (TLGP), Lys-51, 87–91 (DGTTT), Gly-415, 479–481 (NAA), and Asp-495.

It belongs to the chaperonin (HSP60) family. As to quaternary structure, forms a cylinder of 14 subunits composed of two heptameric rings stacked back-to-back. Interacts with the co-chaperonin GroES.

Its subcellular location is the cytoplasm. It carries out the reaction ATP + H2O + a folded polypeptide = ADP + phosphate + an unfolded polypeptide.. In terms of biological role, together with its co-chaperonin GroES, plays an essential role in assisting protein folding. The GroEL-GroES system forms a nano-cage that allows encapsulation of the non-native substrate proteins and provides a physical environment optimized to promote and accelerate protein folding. This chain is Chaperonin GroEL, found in Francisella tularensis subsp. tularensis (strain SCHU S4 / Schu 4).